A 144-amino-acid chain; its full sequence is Eukaryotic translation initiation factor 1A (144 aa).

A compositionally biased stretch (basic residues) spans 1–15; the sequence is MPKNKGKGGKNRRRG. Disordered regions lie at residues 1-26 and 114-144; these read MPKNKGKGGKNRRRGKNENESEKREL and KINETDTFGPGDDDEIQFDDIGDDDEDIDDI. The span at 16–26 shows a compositional bias: basic and acidic residues; the sequence is KNENESEKREL. One can recognise an S1-like domain in the interval 22 to 96; sequence EKRELVFKED…NKADVILKYN (75 aa). A compositionally biased stretch (acidic residues) spans 124 to 144; it reads GDDDEIQFDDIGDDDEDIDDI.

The protein belongs to the eIF-1A family. As to quaternary structure, component of the 43S pre-initiation complex (43S PIC), which is composed of the 40S ribosomal subunit, EIF1, eIF1A (EIF1AX), eIF3 complex, EIF5 and eIF2-GTP-initiator tRNA complex (eIF2 ternary complex). Interacts with EIF5; this interaction contributes to the maintenance of EIF1 within the open 43S PIC. Interacts through its C-terminal domain (CTD) with the CTD of EIF5B; from the location of the start codon by the 43S complex until the formation of the 80S complex.

It is found in the cytoplasm. Component of the 43S pre-initiation complex (43S PIC), which binds to the mRNA cap-proximal region, scans mRNA 5'-untranslated region, and locates the initiation codon. This protein enhances formation of the cap-proximal complex. Together with EIF1, facilitates scanning, start codon recognition, promotion of the assembly of 48S complex at the initiation codon (43S PIC becomes 48S PIC after the start codon is reached), and dissociation of aberrant complexes. After start codon location, together with EIF5B orients the initiator methionine-tRNA in a conformation that allows 60S ribosomal subunit joining to form the 80S initiation complex. Is released after 80S initiation complex formation, just after GTP hydrolysis by EIF5B, and before release of EIF5B. Its globular part is located in the A site of the 40S ribosomal subunit. Its interaction with EIF5 during scanning contribute to the maintenance of EIF1 within the open 43S PIC. In contrast to yeast orthologs, does not bind EIF1. The sequence is that of Eukaryotic translation initiation factor 1A (Eif1a) from Mus musculus (Mouse).